A 289-amino-acid polypeptide reads, in one-letter code: Cytochrome bc1 complex cytochrome c subunit (289 aa).

Over residues 1–11 the composition is skewed to basic residues; the sequence is MKKLGFTRSSR. A disordered region spans residues 1–28; it reads MKKLGFTRSSRRCSQPQEREQESERSRR. A helical transmembrane segment spans residues 37-55; that stretch reads GLLLLVALTVSGGLAAVLT. 2 consecutive Cytochrome c domains span residues 69–149 and 170–248; these read ALLR…QANG and TDLG…RTVI. The heme c site is built by Cys-82, Cys-85, His-86, Cys-183, Cys-186, and His-187. A helical membrane pass occupies residues 267-287; the sequence is GMAIWIIGMVTAIGLALWIGA.

In terms of assembly, the cytochrome bc1 complex is composed of a cytochrome b (QcrB), the Rieske iron-sulfur protein (QcrA) and a diheme cytochrome c (QcrC) subunit. Post-translationally, binds 2 heme c groups covalently per subunit.

It is found in the cell membrane. The enzyme catalyses a quinol + 2 Fe(III)-[cytochrome c](out) = a quinone + 2 Fe(II)-[cytochrome c](out) + 2 H(+)(out). Its function is as follows. Cytochrome b subunit of the cytochrome bc1 complex, an essential component of the respiratory electron transport chain required for ATP synthesis. The bc1 complex catalyzes the oxidation of ubiquinol and the reduction of cytochrome c in the respiratory chain. The bc1 complex operates through a Q-cycle mechanism that couples electron transfer to generation of the proton gradient that drives ATP synthesis. This chain is Cytochrome bc1 complex cytochrome c subunit (qcrC), found in Mycobacterium leprae (strain TN).